We begin with the raw amino-acid sequence, 363 residues long: Endopolygalacturonase B (363 aa).

The first 20 residues, 1 to 20 (MQLLQSSVIAATVGAALVAA), serve as a signal peptide directing secretion. The propeptide occupies 21–28 (VPVELKAR). A disulfide bridge connects residues Cys31 and Cys46. PbH1 repeat units lie at residues 158-187 (SDNLNITDVTIDNSAGTAEGHNTDAFDVGS), 188-209 (STYINIDGATVYNQDDCLAINS), 210-230 (GSHITFTNGYCDGGHGLSIGS), 239-260 (VEDVTISNSKVVNSQNGVRIKT), 268-290 (VSNVKFEDITLSGITKYGLIVEQ), and 302-347 (TNGI…SITG). A glycan (N-linked (GlcNAc...) asparagine) is linked at Asn162. Asp202 acts as the Proton donor in catalysis. Cys204 and Cys220 are disulfide-bonded. Residue His224 is part of the active site. Disulfide bonds link Cys330–Cys335 and Cys354–Cys363. Asn356 carries N-linked (GlcNAc...) asparagine glycosylation.

It belongs to the glycosyl hydrolase 28 family.

Its subcellular location is the secreted. It catalyses the reaction (1,4-alpha-D-galacturonosyl)n+m + H2O = (1,4-alpha-D-galacturonosyl)n + (1,4-alpha-D-galacturonosyl)m.. Functionally, involved in maceration and soft-rotting of plant tissue. Hydrolyzes the 1,4-alpha glycosidic bonds of de-esterified pectate in the smooth region of the plant cell wall. This chain is Endopolygalacturonase B (pgaB), found in Aspergillus oryzae (strain ATCC 42149 / RIB 40) (Yellow koji mold).